Here is a 447-residue protein sequence, read N- to C-terminus: Teichoic acids export ATP-binding protein TagH (447 aa).

The ABC transporter domain maps to 24–246 (DKLKTLFSVF…YRAFLHRYNH (223 aa)). ATP is bound at residue 60–67 (GLNGSGKS). Positions 247 to 447 (FTEPQKESYQ…QVLKLKEVTE (201 aa)) are unknown. Residues 359–393 (NAVKTTKTKPASTKESRQQEEVQPSPTNVPENNNS) form a disordered region. 2 stretches are compositionally biased toward polar residues: residues 360 to 369 (AVKTTKTKPA) and 379 to 393 (EVQPSPTNVPENNNS). A LysM domain is found at 398 to 442 (STYTVEVGDSVSLIAENHGLTIEQLQTLNPEIIEVPIYPGQVLKL).

This sequence belongs to the ABC transporter superfamily. Teichoic acids exporter (TC 3.A.1.104.1) family. As to quaternary structure, the complex is composed of two ATP-binding proteins (TagH) and two transmembrane proteins (TagG).

It localises to the cell membrane. The enzyme catalyses ATP + H2O + teichoic acidSide 1 = ADP + phosphate + teichoic acidSide 2.. Its function is as follows. Part of the ABC transporter complex TagGH involved in teichoic acids export. Responsible for energy coupling to the transport system. The chain is Teichoic acids export ATP-binding protein TagH from Enterococcus faecalis (strain ATCC 700802 / V583).